The following is a 1249-amino-acid chain: Protein lingerer (1249 aa).

A disordered region spans residues 1-66 (MSTQTRSGGG…VVKAKQPTAE (66 aa)). Gly residues-rich tracts occupy residues 7–30 (SGGG…GAAG) and 38–50 (GSTG…GAGG). The 41-residue stretch at 84-124 (KIQEKIQSLMETTQRSEEEVCCALQECDSDLDRAVIFLLET) folds into the UBA domain. Disordered regions lie at residues 132–312 (TTSK…LKPE), 350–375 (SAGA…ASNV), 454–506 (MPPM…PPTT), 549–579 (YAAA…AVEM), 616–717 (TTGT…TSVS), 738–922 (PYGQ…SLPI), 1016–1042 (GRFT…TGSG), 1124–1149 (QQQS…APSM), 1164–1186 (KQSF…AGTT), and 1211–1249 (QNMH…TGPN). Over residues 186 to 209 (NRGGSGNQRSGGPGRGGRAGGYRD) the composition is skewed to gly residues. Residues 210–227 (GGGDRDRDRDRNGYDKGG) show a composition bias toward basic and acidic residues. Gly residues-rich tracts occupy residues 228–240 (EGGG…GGDG) and 248–269 (DGPG…GGPR). Residues 350–369 (SAGAGAQQQQSQQSTQTGVP) are compositionally biased toward low complexity. Residues 457–494 (MNTSSSLSAEQSQYFSTLSSQNSNLQPTPSAVGFQQQP) show a composition bias toward polar residues. Composition is skewed to low complexity over residues 549 to 559 (YAAAATQQPPV), 616 to 639 (TTGT…PATV), and 647 to 664 (QSQL…APQQ). A compositionally biased stretch (polar residues) spans 678–705 (ASSQIMPGQGTTEALSSQNDGLANSYSR). The span at 706-717 (TNASGSVSTSVS) shows a compositional bias: low complexity. Composition is skewed to polar residues over residues 738 to 769 (PYGQ…TASY) and 777 to 809 (GYNN…NVNA). The segment covering 811–861 (QPPSSSVTNNVVPNNNTGNSVGGVSNQSNLPVNNNAVNSSSNNNAGGYLSS) has biased composition (low complexity). Residues 862-873 (QYPVSQTSSAFP) show a composition bias toward polar residues. 3 stretches are compositionally biased toward low complexity: residues 874–884 (SQQNYQNSSQN), 892–922 (NSNT…SLPI), and 1023–1034 (NNSSPVSNVPSS). The span at 1124 to 1138 (QQQSKGQTVANQQSG) shows a compositional bias: polar residues. Over residues 1216-1249 (DSNSSGQRPQNNNQGKTASKQQGYSASTYWTGPN) the composition is skewed to polar residues.

The protein localises to the cytoplasm. Its function is as follows. Acts in the nervous system to mediate the control of copulatory organs during courtship. This Anopheles gambiae (African malaria mosquito) protein is Protein lingerer.